We begin with the raw amino-acid sequence, 428 residues long: Glutamate-1-semialdehyde 2,1-aminomutase (428 aa).

K265 is subject to N6-(pyridoxal phosphate)lysine.

This sequence belongs to the class-III pyridoxal-phosphate-dependent aminotransferase family. HemL subfamily. As to quaternary structure, homodimer. Pyridoxal 5'-phosphate serves as cofactor.

It is found in the cytoplasm. It catalyses the reaction (S)-4-amino-5-oxopentanoate = 5-aminolevulinate. It participates in porphyrin-containing compound metabolism; protoporphyrin-IX biosynthesis; 5-aminolevulinate from L-glutamyl-tRNA(Glu): step 2/2. The sequence is that of Glutamate-1-semialdehyde 2,1-aminomutase from Shewanella loihica (strain ATCC BAA-1088 / PV-4).